A 174-amino-acid chain; its full sequence is MQAFEQKSSYERAELITCGQGNMFGPGNAQLPVPNMLMLDRISHISQTGGEFGKGEIIAELDITPDLWFFDCHFPGDPVMPGCLGLDAMWQLVGFFLAWKGNAGRGRALGAGEVKFTGQILPTASKVTYHINLKRVIERKLVMGIADGRVAVDGKEIYFAKDLRVGLFTNTDSF.

Residue His73 is part of the active site.

It belongs to the thioester dehydratase family. FabA subfamily. As to quaternary structure, homodimer.

Its subcellular location is the cytoplasm. It carries out the reaction a (3R)-hydroxyacyl-[ACP] = a (2E)-enoyl-[ACP] + H2O. The catalysed reaction is (3R)-hydroxydecanoyl-[ACP] = (2E)-decenoyl-[ACP] + H2O. It catalyses the reaction (2E)-decenoyl-[ACP] = (3Z)-decenoyl-[ACP]. It participates in lipid metabolism; fatty acid biosynthesis. In terms of biological role, necessary for the introduction of cis unsaturation into fatty acids. Catalyzes the dehydration of (3R)-3-hydroxydecanoyl-ACP to E-(2)-decenoyl-ACP and then its isomerization to Z-(3)-decenoyl-ACP. Can catalyze the dehydratase reaction for beta-hydroxyacyl-ACPs with saturated chain lengths up to 16:0, being most active on intermediate chain length. The polypeptide is 3-hydroxydecanoyl-[acyl-carrier-protein] dehydratase (Saccharophagus degradans (strain 2-40 / ATCC 43961 / DSM 17024)).